The sequence spans 1414 residues: Phenyloxazoline synthase MbtB (1414 aa).

Residues 5–78 form the Carrier 1 domain; it reads TACSEIIRAE…AWSQLVSAGT (74 aa). Ser-39 bears the O-(pantetheine 4'-phosphoryl)serine mark. Positions 96–394 are condensation/cyclization; that stretch reads EGEPFPVAPM…SSLLLDVDLT (299 aa). The adenylation stretch occupies residues 579-975; that stretch reads SYAQLRDQAS…RLPGVHAAAA (397 aa). The Carrier 2 domain maps to 1057–1135; that stretch reads APRTVLQRAL…ALAQLLTGRE (79 aa). O-(pantetheine 4'-phosphoryl)serine is present on Ser-1094. Residues 1188 to 1413 are thioesterase; that stretch reads GAVLVFPHAG…AVARMVSADV (226 aa).

This sequence belongs to the ATP-dependent AMP-binding enzyme family. MbtB subfamily. The cofactor is pantetheine 4'-phosphate. In terms of processing, 4'-phosphopantetheine is transferred from CoA to a specific serine in each of the two carrier protein domains, leading to their activation from apo to holo forms.

The protein operates within siderophore biosynthesis; mycobactin biosynthesis. Involved in the initial steps of the mycobactin biosynthetic pathway. Putatively couples activated salicylic acid with serine or threonine and cyclizes this precursor to the hydroxyphenyloxazoline ring system present in this class of siderophores. Essential for growth in macrophages. The sequence is that of Phenyloxazoline synthase MbtB (mbtB) from Mycobacterium tuberculosis (strain CDC 1551 / Oshkosh).